We begin with the raw amino-acid sequence, 738 residues long: Polyphosphate kinase (738 aa).

The disordered stretch occupies residues 1–48 (MIGNDRWVTEIETGPVTEARPDTNAREPGDRTPAAPPAATPAATTDQL). Basic and acidic residues predominate over residues 19 to 30 (ARPDTNAREPGD). N91 is an ATP binding site. Residues R427 and R457 each contribute to the Mg(2+) site. H487 acts as the Phosphohistidine intermediate in catalysis. Residues Y520, R620, and H648 each contribute to the ATP site.

This sequence belongs to the polyphosphate kinase 1 (PPK1) family. Requires Mg(2+) as cofactor. An intermediate of this reaction is the autophosphorylated ppk in which a phosphate is covalently linked to a histidine residue through a N-P bond.

It carries out the reaction [phosphate](n) + ATP = [phosphate](n+1) + ADP. Catalyzes the reversible transfer of the terminal phosphate of ATP to form a long-chain polyphosphate (polyP). The polypeptide is Polyphosphate kinase (Mycobacterium ulcerans (strain Agy99)).